We begin with the raw amino-acid sequence, 550 residues long: tRNA modification GTPase MnmE (550 aa).

(6S)-5-formyl-5,6,7,8-tetrahydrofolate-binding residues include Arg20, Glu78, and Arg116. The TrmE-type G domain occupies 212–478 (GFSVVIVGKP…LLDKIFDIIS (267 aa)). Asn222 provides a ligand contact to K(+). GTP-binding positions include 222-227 (NVGKST), 241-247 (TDIPGTT), and 266-269 (DTAG). Position 226 (Ser226) interacts with Mg(2+). Thr241, Ile243, and Thr246 together coordinate K(+). Mg(2+) is bound at residue Thr247. Lys550 is a (6S)-5-formyl-5,6,7,8-tetrahydrofolate binding site.

It belongs to the TRAFAC class TrmE-Era-EngA-EngB-Septin-like GTPase superfamily. TrmE GTPase family. As to quaternary structure, homodimer. Heterotetramer of two MnmE and two MnmG subunits. K(+) is required as a cofactor.

It is found in the cytoplasm. In terms of biological role, exhibits a very high intrinsic GTPase hydrolysis rate. Involved in the addition of a carboxymethylaminomethyl (cmnm) group at the wobble position (U34) of certain tRNAs, forming tRNA-cmnm(5)s(2)U34. This Neorickettsia sennetsu (strain ATCC VR-367 / Miyayama) (Ehrlichia sennetsu) protein is tRNA modification GTPase MnmE.